A 279-amino-acid polypeptide reads, in one-letter code: Thymidylate synthase (279 aa).

Residue 133–134 (RR) participates in dUMP binding. Cysteine 154 serves as the catalytic Nucleophile. DUMP contacts are provided by residues 178-181 (RSND), asparagine 189, and 219-221 (HIY). Aspartate 181 lines the (6R)-5,10-methylene-5,6,7,8-tetrahydrofolate pocket. Position 278 (alanine 278) interacts with (6R)-5,10-methylene-5,6,7,8-tetrahydrofolate.

It belongs to the thymidylate synthase family. Bacterial-type ThyA subfamily. In terms of assembly, homodimer.

The protein localises to the cytoplasm. It carries out the reaction dUMP + (6R)-5,10-methylene-5,6,7,8-tetrahydrofolate = 7,8-dihydrofolate + dTMP. It participates in pyrimidine metabolism; dTTP biosynthesis. Catalyzes the reductive methylation of 2'-deoxyuridine-5'-monophosphate (dUMP) to 2'-deoxythymidine-5'-monophosphate (dTMP) while utilizing 5,10-methylenetetrahydrofolate (mTHF) as the methyl donor and reductant in the reaction, yielding dihydrofolate (DHF) as a by-product. This enzymatic reaction provides an intracellular de novo source of dTMP, an essential precursor for DNA biosynthesis. In Streptococcus mutans serotype c (strain ATCC 700610 / UA159), this protein is Thymidylate synthase.